Here is a 689-residue protein sequence, read N- to C-terminus: Glycine--tRNA ligase beta subunit (689 aa).

This sequence belongs to the class-II aminoacyl-tRNA synthetase family. In terms of assembly, tetramer of two alpha and two beta subunits.

The protein localises to the cytoplasm. It catalyses the reaction tRNA(Gly) + glycine + ATP = glycyl-tRNA(Gly) + AMP + diphosphate. In Salmonella dublin (strain CT_02021853), this protein is Glycine--tRNA ligase beta subunit.